The sequence spans 298 residues: Acetylglutamate kinase (298 aa).

Substrate contacts are provided by residues 61 to 62, arginine 83, and asparagine 188; that span reads GG.

Belongs to the acetylglutamate kinase family. ArgB subfamily.

It localises to the cytoplasm. It carries out the reaction N-acetyl-L-glutamate + ATP = N-acetyl-L-glutamyl 5-phosphate + ADP. The protein operates within amino-acid biosynthesis; L-arginine biosynthesis; N(2)-acetyl-L-ornithine from L-glutamate: step 2/4. Functionally, catalyzes the ATP-dependent phosphorylation of N-acetyl-L-glutamate. In Syntrophobacter fumaroxidans (strain DSM 10017 / MPOB), this protein is Acetylglutamate kinase.